Reading from the N-terminus, the 333-residue chain is D-glutamate N-acetyltransferase (333 aa).

This sequence belongs to the N-acetyltransferase DgcN family.

The catalysed reaction is D-glutamate + acetyl-CoA = N-acetyl-D-glutamate + CoA + H(+). Its pathway is amino-acid degradation. In terms of biological role, N-acetyltransferase involved in a deamination-independent D-glutamate degradation pathway, named the DgcN-DgcA pathway. Catalyzes the transfer of the acetyl moiety from acetyl-CoA to D-glutamate to generate N-acetyl-D-glutamate. This chain is D-glutamate N-acetyltransferase, found in Tritonibacter scottomollicae (Epibacterium scottomollicae).